We begin with the raw amino-acid sequence, 188 residues long: Ribosome-recycling factor (188 aa).

Belongs to the RRF family.

The protein localises to the cytoplasm. Functionally, responsible for the release of ribosomes from messenger RNA at the termination of protein biosynthesis. May increase the efficiency of translation by recycling ribosomes from one round of translation to another. This chain is Ribosome-recycling factor, found in Acidiphilium cryptum (strain JF-5).